Here is a 377-residue protein sequence, read N- to C-terminus: uncharacterized protein (377 aa).

The next 7 membrane-spanning stretches (helical) occupy residues 21–41 (WLLA…LVLF), 66–86 (LVTF…FGLG), 163–183 (IGVL…GIVL), 197–217 (AILF…IAII), 236–256 (FYMG…YHIF), 292–312 (VNLI…FLIL), and 339–359 (IYFL…ELLF).

It is found in the cell membrane. This is an uncharacterized protein from Mycoplasma pneumoniae (strain ATCC 29342 / M129 / Subtype 1) (Mycoplasmoides pneumoniae).